We begin with the raw amino-acid sequence, 529 residues long: ADP,ATP carrier protein 1 (529 aa).

The next 12 membrane-spanning stretches (helical) occupy residues 24 to 44 (LKKV…YTIL), 63 to 83 (IPFI…LIYA), 93 to 113 (ALFY…PLVI), 124 to 144 (DFAD…IAML), 149 to 169 (FAAF…LMFW), 184 to 204 (FYAL…PAIV), 220 to 240 (WGVT…IIAA), 284 to 304 (YMLL…LVEV), 322 to 342 (AFMG…MLFI), 356 to 376 (ALVT…LVIF), 381 to 401 (TGLV…VGAV), and 463 to 483 (ISAM…VWLT). The span at 509-520 (AAEKEASPAAKE) shows a compositional bias: low complexity. Residues 509-529 (AAEKEASPAAKEVSPAIEGVS) form a disordered region.

The protein belongs to the ADP/ATP translocase tlc family.

It localises to the cell membrane. The protein is ADP,ATP carrier protein 1 (tlcA) of Chlamydia muridarum (strain MoPn / Nigg).